The sequence spans 129 residues: Phosphoribosyl-AMP cyclohydrolase (129 aa).

D84 contacts Mg(2+). C85 lines the Zn(2+) pocket. Residues D86 and D88 each contribute to the Mg(2+) site. Residues C101 and C108 each contribute to the Zn(2+) site.

The protein belongs to the PRA-CH family. As to quaternary structure, homodimer. It depends on Mg(2+) as a cofactor. The cofactor is Zn(2+).

The protein localises to the cytoplasm. It carries out the reaction 1-(5-phospho-beta-D-ribosyl)-5'-AMP + H2O = 1-(5-phospho-beta-D-ribosyl)-5-[(5-phospho-beta-D-ribosylamino)methylideneamino]imidazole-4-carboxamide. Its pathway is amino-acid biosynthesis; L-histidine biosynthesis; L-histidine from 5-phospho-alpha-D-ribose 1-diphosphate: step 3/9. Functionally, catalyzes the hydrolysis of the adenine ring of phosphoribosyl-AMP. This is Phosphoribosyl-AMP cyclohydrolase from Halobacterium salinarum (strain ATCC 700922 / JCM 11081 / NRC-1) (Halobacterium halobium).